Reading from the N-terminus, the 373-residue chain is Centrosomal protein of 41 kDa (373 aa).

A disordered region spans residues 89-127 (QRLEDNDSATSEPDAEITAKTNGNGSPGEQSPSPVQFIN). A phosphoserine mark is found at Ser96 and Ser99. Polar residues predominate over residues 107 to 127 (AKTNGNGSPGEQSPSPVQFIN). Thr109 carries the phosphothreonine modification. Ser114 and Ser121 each carry phosphoserine. One can recognise a Rhodanese domain in the interval 169-266 (PDCPFLLLDV…LAQKFPEGLI (98 aa)). 2 disordered regions span residues 275-300 (QQAL…ENKW) and 315-373 (EEDQ…KPWK). An Omega-N-methylarginine modification is found at Arg343.

The protein belongs to the CEP41 family. Found in a complex with TTLL6.

It is found in the cytoplasm. The protein localises to the cytoskeleton. Its subcellular location is the microtubule organizing center. It localises to the centrosome. The protein resides in the cell projection. It is found in the cilium. The protein localises to the cilium basal body. In terms of biological role, required during ciliogenesis for tubulin glutamylation in cilium. Probably acts by participating in the transport of TTLL6, a tubulin polyglutamylase, between the basal body and the cilium. The polypeptide is Centrosomal protein of 41 kDa (CEP41) (Bos taurus (Bovine)).